Here is a 378-residue protein sequence, read N- to C-terminus: Protein arginine N-methyltransferase 6 (378 aa).

Residues 1–46 (MSLSKKRKLESGDSGGAGAGGEGAEEENGGEQEAAPPRPRRTKSER) are disordered. The segment covering 13–22 (DSGGAGAGGE) has biased composition (gly residues). Arginine 38 carries the asymmetric dimethylarginine; by autocatalysis modification. Residues 47–377 (DQLYYECYSD…EEKTKDFAME (331 aa)) enclose the SAM-dependent MTase PRMT-type domain. Positions 60, 69, 93, 115, and 144 each coordinate S-adenosyl-L-methionine. Catalysis depends on residues glutamate 158 and glutamate 167.

The protein belongs to the class I-like SAM-binding methyltransferase superfamily. Protein arginine N-methyltransferase family. PRMT6 subfamily. As to quaternary structure, interacts with (and methylates) HIV-1 Tat, Rev and Nucleocapsid protein p7 (NC). Interacts with EPB41L3 and NCOA1. In terms of processing, automethylation enhances its stability.

Its subcellular location is the nucleus. The enzyme catalyses L-arginyl-[protein] + 2 S-adenosyl-L-methionine = N(omega),N(omega)-dimethyl-L-arginyl-[protein] + 2 S-adenosyl-L-homocysteine + 2 H(+). In terms of biological role, arginine methyltransferase that can catalyze the formation of both omega-N monomethylarginine (MMA) and asymmetrical dimethylarginine (aDMA), with a strong preference for the formation of aDMA. Preferentially methylates arginyl residues present in a glycine and arginine-rich domain and displays preference for monomethylated substrates. Specifically mediates the asymmetric dimethylation of histone H3 'Arg-2' to form H3R2me2a. H3R2me2a represents a specific tag for epigenetic transcriptional repression and is mutually exclusive with methylation on histone H3 'Lys-4' (H3K4me2 and H3K4me3). Acts as a transcriptional repressor of various genes such as HOXA2, THBS1 and TP53. Repression of TP53 blocks cellular senescence. Also methylates histone H2A and H4 'Arg-3' (H2AR3me and H4R3me, respectively). Acts as a regulator of DNA base excision during DNA repair by mediating the methylation of DNA polymerase beta (POLB), leading to the stimulation of its polymerase activity by enhancing DNA binding and processivity. Methylates HMGA1. Regulates alternative splicing events. Acts as a transcriptional coactivator of a number of steroid hormone receptors including ESR1, ESR2, PGR and NR3C1. Promotes fasting-induced transcriptional activation of the gluconeogenic program through methylation of the CRTC2 transcription coactivator. Methylates GPS2, protecting GPS2 from ubiquitination and degradation. Methylates SIRT7, inhibiting SIRT7 histone deacetylase activity and promoting mitochondria biogenesis. The polypeptide is Protein arginine N-methyltransferase 6 (Prmt6) (Mus musculus (Mouse)).